A 269-amino-acid polypeptide reads, in one-letter code: MEMO1 family protein TV1383 (269 aa).

The protein belongs to the MEMO1 family.

The protein is MEMO1 family protein TV1383 of Thermoplasma volcanium (strain ATCC 51530 / DSM 4299 / JCM 9571 / NBRC 15438 / GSS1).